The sequence spans 109 residues: Iron-sulfur cluster assembly protein CyaY (109 aa).

This sequence belongs to the frataxin family.

Functionally, involved in iron-sulfur (Fe-S) cluster assembly. May act as a regulator of Fe-S biogenesis. This is Iron-sulfur cluster assembly protein CyaY from Bordetella pertussis (strain Tohama I / ATCC BAA-589 / NCTC 13251).